A 586-amino-acid chain; its full sequence is Eukaryotic translation initiation factor 2A (586 aa).

WD repeat units follow at residues 23–63, 125–163, and 356–401; these read PSFT…NIVN, QKKM…TIAN, and VASD…HNYE. Residues 434–531 are disordered; the sequence is ELPSAEPKPA…SAVPVVTSGD (98 aa). Residues 470 to 479 show a composition bias toward polar residues; that stretch reads MKPQSGSSEK. The segment covering 495-506 has biased composition (basic and acidic residues); the sequence is KKAAKQEAKADC. Positions 507-521 are enriched in polar residues; it reads SQESTQSSASQNTPR. A coiled-coil region spans residues 532–583; the sequence is PEIDKKIKNLKKKLKAIEQLKEQAAAGKQLEKNQLEKIQKESALLQELEDLE.

The protein belongs to the WD repeat EIF2A family.

Functionally, functions in the early steps of protein synthesis of a small number of specific mRNAs. Acts by directing the binding of methionyl-tRNAi to 40S ribosomal subunits. In contrast to the eIF-2 complex, it binds methionyl-tRNAi to 40S subunits in a codon-dependent manner, whereas the eIF-2 complex binds methionyl-tRNAi to 40S subunits in a GTP-dependent manner. The sequence is that of Eukaryotic translation initiation factor 2A (EIF2A) from Gallus gallus (Chicken).